Consider the following 156-residue polypeptide: ATP synthase subunit b (156 aa).

The chain crosses the membrane as a helical span at residues 12-32 (IAFAIFVLFCMKFIWPALMGA).

This sequence belongs to the ATPase B chain family. F-type ATPases have 2 components, F(1) - the catalytic core - and F(0) - the membrane proton channel. F(1) has five subunits: alpha(3), beta(3), gamma(1), delta(1), epsilon(1). F(0) has three main subunits: a(1), b(2) and c(10-14). The alpha and beta chains form an alternating ring which encloses part of the gamma chain. F(1) is attached to F(0) by a central stalk formed by the gamma and epsilon chains, while a peripheral stalk is formed by the delta and b chains.

The protein localises to the cell inner membrane. Functionally, f(1)F(0) ATP synthase produces ATP from ADP in the presence of a proton or sodium gradient. F-type ATPases consist of two structural domains, F(1) containing the extramembraneous catalytic core and F(0) containing the membrane proton channel, linked together by a central stalk and a peripheral stalk. During catalysis, ATP synthesis in the catalytic domain of F(1) is coupled via a rotary mechanism of the central stalk subunits to proton translocation. Component of the F(0) channel, it forms part of the peripheral stalk, linking F(1) to F(0). The protein is ATP synthase subunit b of Psychrobacter sp. (strain PRwf-1).